Reading from the N-terminus, the 219-residue chain is Cytidylate kinase (219 aa).

Residue 21–29 (GPAASGKGT) coordinates ATP.

It belongs to the cytidylate kinase family. Type 1 subfamily.

The protein resides in the cytoplasm. It carries out the reaction CMP + ATP = CDP + ADP. The catalysed reaction is dCMP + ATP = dCDP + ADP. This Rickettsia africae (strain ESF-5) protein is Cytidylate kinase.